The following is a 347-amino-acid chain: Selenide, water dikinase 2 (347 aa).

Selenocysteine 18 is an active-site residue. Residue selenocysteine 18 is a non-standard amino acid, selenocysteine. ATP contacts are provided by residues lysine 21 and 48 to 50; that span reads TSD. Aspartate 51 provides a ligand contact to Mg(2+). ATP contacts are provided by residues aspartate 68, aspartate 91, and 138–140; that span reads GHT. Residue aspartate 91 participates in Mg(2+) binding. Aspartate 226 is a binding site for Mg(2+).

Belongs to the selenophosphate synthase 1 family. Class I subfamily. Homodimer. Requires Mg(2+) as cofactor.

It carries out the reaction hydrogenselenide + ATP + H2O = selenophosphate + AMP + phosphate + 2 H(+). In terms of biological role, synthesizes selenophosphate from selenide and ATP. This Peptoclostridium acidaminophilum (Eubacterium acidaminophilum) protein is Selenide, water dikinase 2.